The sequence spans 155 residues: Cardio acceleratory peptide 2b (155 aa).

The N-terminal stretch at 1 to 26 is a signal peptide; the sequence is MKAIFSLYNIVSAILLLVLLAEFSTA. Residues 27–33 constitute a propeptide that is removed on maturation; it reads ELNHDKN. Valine amide is present on valine 47. A propeptide spanning residues 50–85 is cleaved from the precursor; that stretch reads SDPSLANSLRDASDAAVFDGLYGDASQEDYNEADYQ. The residue at position 96 (valine 96) is a Valine amide. A propeptide spanning residues 99 to 117 is cleaved from the precursor; the sequence is SDAELRKFAHLLALQQVLD. The residue at position 134 (leucine 134) is a Leucine amide. A propeptide spanning residues 138-155 is cleaved from the precursor; sequence SVDAKAFSDASKGQQEFN.

The protein belongs to the pyrokinin family.

The protein resides in the secreted. CAP-1 and CAP-2, but not CAP-3 are ligands for the Capa receptor. CAP-1 and CAP-2 are probably components of the signal transduction pathway that leads to Malpighian tubule fluid secretion via the second messenger nitric oxide. In Drosophila pseudoobscura pseudoobscura (Fruit fly), this protein is Cardio acceleratory peptide 2b.